The primary structure comprises 349 residues: Neutral protease 2 homolog ACLA_052720 (349 aa).

Positions methionine 1–alanine 19 are cleaved as a signal peptide. Residues isoleucine 20–arginine 172 constitute a propeptide that is removed on maturation. Intrachain disulfides connect cysteine 178-cysteine 250 and cysteine 257-cysteine 275. Residue histidine 300 coordinates Zn(2+). Residue glutamate 301 is part of the active site. Residues histidine 304 and aspartate 315 each coordinate Zn(2+).

Belongs to the peptidase M35 family. It depends on Zn(2+) as a cofactor.

It localises to the secreted. It catalyses the reaction Preferential cleavage of bonds with hydrophobic residues in P1'. Also 3-Asn-|-Gln-4 and 8-Gly-|-Ser-9 bonds in insulin B chain.. Functionally, secreted metalloproteinase that allows assimilation of proteinaceous substrates. Shows high activities on basic nuclear substrates such as histone and protamine. This chain is Neutral protease 2 homolog ACLA_052720, found in Aspergillus clavatus (strain ATCC 1007 / CBS 513.65 / DSM 816 / NCTC 3887 / NRRL 1 / QM 1276 / 107).